The sequence spans 239 residues: Endoglucanase A (239 aa).

The first 16 residues, 1 to 16, serve as a signal peptide directing secretion; it reads MKLSMTLSLFAATAMG.

Belongs to the glycosyl hydrolase 12 (cellulase H) family.

It catalyses the reaction Endohydrolysis of (1-&gt;4)-beta-D-glucosidic linkages in cellulose, lichenin and cereal beta-D-glucans.. Its function is as follows. Has carboxylmethylcellulase activity. The sequence is that of Endoglucanase A (cekA) from Aspergillus kawachii (strain NBRC 4308) (White koji mold).